A 354-amino-acid polypeptide reads, in one-letter code: Uroporphyrinogen decarboxylase (354 aa).

Substrate contacts are provided by residues 27-31 (RQAGR), D77, Y153, T208, and H326.

It belongs to the uroporphyrinogen decarboxylase family. As to quaternary structure, homodimer.

Its subcellular location is the cytoplasm. The catalysed reaction is uroporphyrinogen III + 4 H(+) = coproporphyrinogen III + 4 CO2. The protein operates within porphyrin-containing compound metabolism; protoporphyrin-IX biosynthesis; coproporphyrinogen-III from 5-aminolevulinate: step 4/4. Functionally, catalyzes the decarboxylation of four acetate groups of uroporphyrinogen-III to yield coproporphyrinogen-III. This chain is Uroporphyrinogen decarboxylase, found in Neisseria gonorrhoeae (strain NCCP11945).